A 188-amino-acid chain; its full sequence is ATP synthase subunit b (188 aa).

A helical membrane pass occupies residues 21 to 41 (ILPHLGELIVGIIFAIIIYAV).

The protein belongs to the ATPase B chain family. As to quaternary structure, F-type ATPases have 2 components, F(1) - the catalytic core - and F(0) - the membrane proton channel. F(1) has five subunits: alpha(3), beta(3), gamma(1), delta(1), epsilon(1). F(0) has three main subunits: a(1), b(2) and c(10-14). The alpha and beta chains form an alternating ring which encloses part of the gamma chain. F(1) is attached to F(0) by a central stalk formed by the gamma and epsilon chains, while a peripheral stalk is formed by the delta and b chains.

The protein localises to the cell membrane. In terms of biological role, f(1)F(0) ATP synthase produces ATP from ADP in the presence of a proton or sodium gradient. F-type ATPases consist of two structural domains, F(1) containing the extramembraneous catalytic core and F(0) containing the membrane proton channel, linked together by a central stalk and a peripheral stalk. During catalysis, ATP synthesis in the catalytic domain of F(1) is coupled via a rotary mechanism of the central stalk subunits to proton translocation. Component of the F(0) channel, it forms part of the peripheral stalk, linking F(1) to F(0). This is ATP synthase subunit b from Kineococcus radiotolerans (strain ATCC BAA-149 / DSM 14245 / SRS30216).